The primary structure comprises 366 residues: UDP-N-acetylglucosamine--N-acetylmuramyl-(pentapeptide) pyrophosphoryl-undecaprenol N-acetylglucosamine transferase (366 aa).

UDP-N-acetyl-alpha-D-glucosamine contacts are provided by residues 14–16 (TGG), Asn-125, Arg-168, Ser-196, and Gln-297.

It belongs to the glycosyltransferase 28 family. MurG subfamily.

Its subcellular location is the cell inner membrane. It catalyses the reaction di-trans,octa-cis-undecaprenyl diphospho-N-acetyl-alpha-D-muramoyl-L-alanyl-D-glutamyl-meso-2,6-diaminopimeloyl-D-alanyl-D-alanine + UDP-N-acetyl-alpha-D-glucosamine = di-trans,octa-cis-undecaprenyl diphospho-[N-acetyl-alpha-D-glucosaminyl-(1-&gt;4)]-N-acetyl-alpha-D-muramoyl-L-alanyl-D-glutamyl-meso-2,6-diaminopimeloyl-D-alanyl-D-alanine + UDP + H(+). It participates in cell wall biogenesis; peptidoglycan biosynthesis. In terms of biological role, cell wall formation. Catalyzes the transfer of a GlcNAc subunit on undecaprenyl-pyrophosphoryl-MurNAc-pentapeptide (lipid intermediate I) to form undecaprenyl-pyrophosphoryl-MurNAc-(pentapeptide)GlcNAc (lipid intermediate II). This is UDP-N-acetylglucosamine--N-acetylmuramyl-(pentapeptide) pyrophosphoryl-undecaprenol N-acetylglucosamine transferase from Rhodopseudomonas palustris (strain HaA2).